The chain runs to 512 residues: Bifunctional purine biosynthesis protein PurH (512 aa).

One can recognise an MGS-like domain in the interval 1–150 (MIGEERVVRA…KNFPAVLVLV (150 aa)).

This sequence belongs to the PurH family.

It carries out the reaction (6R)-10-formyltetrahydrofolate + 5-amino-1-(5-phospho-beta-D-ribosyl)imidazole-4-carboxamide = 5-formamido-1-(5-phospho-D-ribosyl)imidazole-4-carboxamide + (6S)-5,6,7,8-tetrahydrofolate. The catalysed reaction is IMP + H2O = 5-formamido-1-(5-phospho-D-ribosyl)imidazole-4-carboxamide. It functions in the pathway purine metabolism; IMP biosynthesis via de novo pathway; 5-formamido-1-(5-phospho-D-ribosyl)imidazole-4-carboxamide from 5-amino-1-(5-phospho-D-ribosyl)imidazole-4-carboxamide (10-formyl THF route): step 1/1. Its pathway is purine metabolism; IMP biosynthesis via de novo pathway; IMP from 5-formamido-1-(5-phospho-D-ribosyl)imidazole-4-carboxamide: step 1/1. The protein is Bifunctional purine biosynthesis protein PurH of Chloroflexus aurantiacus (strain ATCC 29366 / DSM 635 / J-10-fl).